The chain runs to 38 residues: Toxin CSTX-16 (38 aa).

Residues Q19 and Q38 each carry the glutamine amide modification.

The protein belongs to the cationic peptide 04 (cupiennin) family. 10 (double chain) subfamily. As to expression, expressed by the venom gland.

It is found in the secreted. This chain is Toxin CSTX-16, found in Cupiennius salei (American wandering spider).